Here is a 210-residue protein sequence, read N- to C-terminus: Na(+)-translocating NADH-quinone reductase subunit D (210 aa).

A run of 5 helical transmembrane segments spans residues 42 to 62 (FVMTLAVTFVTALSNFSVSLI), 72 to 92 (IIVQMAIIASLVIVVDQVLKA), 103 to 123 (VFVGLIITNCIVMGRAEAFAM), 131 to 151 (LIDGIGNGLGYGFVLITVGFF), and 178 to 198 (NGLMLLAPSAFFLIGFLIWVI).

It belongs to the NqrDE/RnfAE family. As to quaternary structure, composed of six subunits; NqrA, NqrB, NqrC, NqrD, NqrE and NqrF.

It localises to the cell inner membrane. The enzyme catalyses a ubiquinone + n Na(+)(in) + NADH + H(+) = a ubiquinol + n Na(+)(out) + NAD(+). Its activity is regulated as follows. This reaction is tightly coupled to the Na(+) pumping activity and specifically requires Na(+) for activity. Inhibited by korormicin and 2-N-heptyl-4-hydroxyquinoline N-oxide (HQNO). Its function is as follows. NQR complex catalyzes the reduction of ubiquinone-1 to ubiquinol by two successive reactions, coupled with the transport of Na(+) ions from the cytoplasm to the periplasm. NqrA to NqrE are probably involved in the second step, the conversion of ubisemiquinone to ubiquinol. The chain is Na(+)-translocating NADH-quinone reductase subunit D from Vibrio alginolyticus.